A 298-amino-acid chain; its full sequence is Probable protein phosphatase 2C 26 (298 aa).

Residues 48–295 (SVGIHAIPHP…DDVTVIVAKV (248 aa)) form the PPM-type phosphatase domain. 4 residues coordinate Mn(2+): Asp-82, Gly-83, Asp-213, and Asp-286.

The protein belongs to the PP2C family. Mg(2+) is required as a cofactor. The cofactor is Mn(2+).

It catalyses the reaction O-phospho-L-seryl-[protein] + H2O = L-seryl-[protein] + phosphate. It carries out the reaction O-phospho-L-threonyl-[protein] + H2O = L-threonyl-[protein] + phosphate. This Arabidopsis thaliana (Mouse-ear cress) protein is Probable protein phosphatase 2C 26.